A 679-amino-acid chain; its full sequence is Glycine--tRNA ligase beta subunit (679 aa).

Belongs to the class-II aminoacyl-tRNA synthetase family. In terms of assembly, tetramer of two alpha and two beta subunits.

The protein resides in the cytoplasm. The catalysed reaction is tRNA(Gly) + glycine + ATP = glycyl-tRNA(Gly) + AMP + diphosphate. The sequence is that of Glycine--tRNA ligase beta subunit from Thermodesulfovibrio yellowstonii (strain ATCC 51303 / DSM 11347 / YP87).